The following is an 80-amino-acid chain: Lantibiotic Flvalpha.c (80 aa).

A propeptide spans 1–38 (MNKNPIYRSEEEAKNIACGNVAAELDENSQALDAINGA) (cleaved by FlvT). Residues Thr-43 and Thr-47 each carry the 2,3-didehydrobutyrine; by FlvM1 modification. Residues 52 to 55 (TLGC) constitute a cross-link (beta-methyllanthionine (Thr-Cys); by FlvM1). The lanthionine (Ser-Cys); by FlvM1 cross-link spans 58–68 (SYGLGNGGYCC). 2 consecutive cross-links (beta-methyllanthionine (Thr-Cys); by FlvM1) follow at residues 69–74 (TYTVEC) and 71–78 (TVECSKTC).

Post-translationally, the lanthionine formed by Ser-58 and Cys-68 forms a putative lipid II binding motif. Maturation of FlvA1 peptides involves the enzymatic conversion of Thr, and Ser into dehydrated AA and the formation of thioether bonds with cysteines. Modifications are processed by the flavecin synthetase FlvM1. This is followed by membrane translocation and cleavage of the modified precursor. In terms of processing, contains DL-lanthionine and DL-beta-methyllanthionine, when coepressed in E.coli with the flavecin synthetase FlvM1.

Its subcellular location is the secreted. In terms of biological role, lanthionine-containing peptide antibiotic (lantibiotic) only active on Gram-positive bacteria in synergy with Flvbeta peptides, which are encoded by the same operon than Flvalpha.a. Shows antibacterial activity in synergy with Flvbeta.b, Flvbeta.c, Flvbeta.e and Flvbeta.g. Does not show antibacterial activity when tested with Flvbeta.a, Flvbeta.d, Flvbeta.f and Flvbeta.h. The bactericidal activity of lantibiotics is based on depolarization of energized bacterial cytoplasmic membranes, initiated by the formation of aqueous transmembrane pores. This Ruminococcus flavefaciens protein is Lantibiotic Flvalpha.c.